A 334-amino-acid chain; its full sequence is S-adenosylmethionine decarboxylase proenzyme 2 (334 aa).

Substrate is bound at residue Phe7. Residues Glu8 and Glu11 contribute to the active site. Residue Glu67 coordinates substrate. Ser68 acts as the Schiff-base intermediate with substrate; via pyruvic acid in catalysis. Ser68 is subject to Pyruvic acid (Ser); by autocatalysis. Catalysis depends on Cys82, which acts as the Proton donor; for catalytic activity. Position 223 (Phe223) interacts with substrate. Residues Ser229 and His243 each act as proton acceptor; for processing activity in the active site. Glu247 is a binding site for substrate. Residue Ser298 is modified to Phosphoserine.

Belongs to the eukaryotic AdoMetDC family. Heterotetramer of two alpha and two beta chains. It depends on pyruvate as a cofactor. Is synthesized initially as an inactive proenzyme. Formation of the active enzyme involves a self-maturation process in which the active site pyruvoyl group is generated from an internal serine residue via an autocatalytic post-translational modification. Two non-identical subunits are generated from the proenzyme in this reaction, and the pyruvate is formed at the N-terminus of the alpha chain, which is derived from the carboxyl end of the proenzyme. The post-translation cleavage follows an unusual pathway, termed non-hydrolytic serinolysis, in which the side chain hydroxyl group of the serine supplies its oxygen atom to form the C-terminus of the beta chain, while the remainder of the serine residue undergoes an oxidative deamination to produce ammonia and the pyruvoyl group blocking the N-terminus of the alpha chain.

It catalyses the reaction S-adenosyl-L-methionine + H(+) = S-adenosyl 3-(methylsulfanyl)propylamine + CO2. It functions in the pathway amine and polyamine biosynthesis; S-adenosylmethioninamine biosynthesis; S-adenosylmethioninamine from S-adenosyl-L-methionine: step 1/1. In terms of biological role, essential for biosynthesis of the polyamines spermidine and spermine. Promotes maintenance and self-renewal of embryonic stem cells, by maintaining spermine levels. This is S-adenosylmethionine decarboxylase proenzyme 2 (Amd2) from Mus spretus (Western Mediterranean mouse).